The sequence spans 249 residues: 3-deoxy-D-manno-octulosonic acid kinase (249 aa).

The active site involves Asp-175.

It belongs to the protein kinase superfamily. KdkA/RfaP family.

The protein resides in the cell inner membrane. The enzyme catalyses an alpha-Kdo-(2-&gt;6)-lipid IVA + ATP = a 4-O-phospho-alpha-Kdo-(2-&gt;6)-lipid IVA + ADP + H(+). It functions in the pathway bacterial outer membrane biogenesis; LPS core biosynthesis. Functionally, catalyzes the ATP-dependent phosphorylation of the 3-deoxy-D-manno-octulosonic acid (Kdo) residue in Kdo-lipid IV(A) at the 4-OH position. In Xanthomonas campestris pv. campestris (strain 8004), this protein is 3-deoxy-D-manno-octulosonic acid kinase.